The sequence spans 335 residues: Phosphate acyltransferase (335 aa).

This sequence belongs to the PlsX family. Homodimer. Probably interacts with PlsY.

The protein localises to the cytoplasm. The catalysed reaction is a fatty acyl-[ACP] + phosphate = an acyl phosphate + holo-[ACP]. It functions in the pathway lipid metabolism; phospholipid metabolism. In terms of biological role, catalyzes the reversible formation of acyl-phosphate (acyl-PO(4)) from acyl-[acyl-carrier-protein] (acyl-ACP). This enzyme utilizes acyl-ACP as fatty acyl donor, but not acyl-CoA. The protein is Phosphate acyltransferase of Leptospira interrogans serogroup Icterohaemorrhagiae serovar copenhageni (strain Fiocruz L1-130).